A 447-amino-acid chain; its full sequence is Tubulin beta-5 chain (447 aa).

The GTP site is built by Gln11, Glu69, Ser138, Gly142, Thr143, Gly144, Asn204, and Asn226. Glu69 serves as a coordination point for Mg(2+). The tract at residues 421–447 (EYQQYQDATADDEEEDYGDEEEDEVAA) is disordered. A compositionally biased stretch (acidic residues) spans 429–447 (TADDEEEDYGDEEEDEVAA).

Belongs to the tubulin family. Dimer of alpha and beta chains. A typical microtubule is a hollow water-filled tube with an outer diameter of 25 nm and an inner diameter of 15 nM. Alpha-beta heterodimers associate head-to-tail to form protofilaments running lengthwise along the microtubule wall with the beta-tubulin subunit facing the microtubule plus end conferring a structural polarity. Microtubules usually have 13 protofilaments but different protofilament numbers can be found in some organisms and specialized cells. Mg(2+) is required as a cofactor. Expressed in roots, leaf sheaths, and suspension cultured cells.

Its subcellular location is the cytoplasm. It is found in the cytoskeleton. Its function is as follows. Tubulin is the major constituent of microtubules, a cylinder consisting of laterally associated linear protofilaments composed of alpha- and beta-tubulin heterodimers. Microtubules grow by the addition of GTP-tubulin dimers to the microtubule end, where a stabilizing cap forms. Below the cap, tubulin dimers are in GDP-bound state, owing to GTPase activity of alpha-tubulin. This Oryza sativa subsp. japonica (Rice) protein is Tubulin beta-5 chain (TUBB5).